The chain runs to 909 residues: Protein translocase subunit SecA (909 aa).

ATP is bound by residues Gln-87, 105–109, and Asp-507; that span reads GEGKT. The interval 834–909 is disordered; the sequence is EAVEEQRRRQ…KYKQCCGKLS (76 aa). Positions 837 to 848 are enriched in basic and acidic residues; that stretch reads EEQRRRQGDMQY. A compositionally biased stretch (gly residues) spans 859–871; sequence QGAGGEGAAGGTA. Cys-893, Cys-895, Cys-904, and Cys-905 together coordinate Zn(2+).

This sequence belongs to the SecA family. Monomer and homodimer. Part of the essential Sec protein translocation apparatus which comprises SecA, SecYEG and auxiliary proteins SecDF-YajC and YidC. Zn(2+) serves as cofactor.

The protein resides in the cell inner membrane. The protein localises to the cytoplasm. The catalysed reaction is ATP + H2O + cellular proteinSide 1 = ADP + phosphate + cellular proteinSide 2.. Part of the Sec protein translocase complex. Interacts with the SecYEG preprotein conducting channel. Has a central role in coupling the hydrolysis of ATP to the transfer of proteins into and across the cell membrane, serving both as a receptor for the preprotein-SecB complex and as an ATP-driven molecular motor driving the stepwise translocation of polypeptide chains across the membrane. In Alkalilimnicola ehrlichii (strain ATCC BAA-1101 / DSM 17681 / MLHE-1), this protein is Protein translocase subunit SecA.